The sequence spans 470 residues: UDP-N-acetylmuramoylalanine--D-glutamate ligase (470 aa).

An ATP-binding site is contributed by 121–127; that stretch reads GTNGKST.

This sequence belongs to the MurCDEF family.

The protein resides in the cytoplasm. The enzyme catalyses UDP-N-acetyl-alpha-D-muramoyl-L-alanine + D-glutamate + ATP = UDP-N-acetyl-alpha-D-muramoyl-L-alanyl-D-glutamate + ADP + phosphate + H(+). It functions in the pathway cell wall biogenesis; peptidoglycan biosynthesis. Cell wall formation. Catalyzes the addition of glutamate to the nucleotide precursor UDP-N-acetylmuramoyl-L-alanine (UMA). This chain is UDP-N-acetylmuramoylalanine--D-glutamate ligase, found in Rhizobium johnstonii (strain DSM 114642 / LMG 32736 / 3841) (Rhizobium leguminosarum bv. viciae).